A 294-amino-acid polypeptide reads, in one-letter code: Aquaporin NIP1-2 (294 aa).

Met1 carries the post-translational modification N-acetylmethionine. The next 2 helical transmembrane spans lie at 54 to 74 (LMAE…AVAV) and 82 to 102 (VTLP…VYSL). An NPA 1 motif is present at residues 111–113 (NPA). A run of 3 helical transmembrane segments spans residues 133 to 153 (VISQ…LFGL), 177 to 197 (SFVI…GVAT), and 201 to 221 (AIGE…VIIA). The short motif at 230–232 (NPG) is the NPA 2 element. A helical membrane pass occupies residues 248 to 268 (WIYIVSPIVGAVSGAWVYNMV). A Phosphoserine modification is found at Ser283.

This sequence belongs to the MIP/aquaporin (TC 1.A.8) family. NIP (TC 1.A.8.12) subfamily. Expressed in developing seeds.

The protein localises to the membrane. Its function is as follows. Water channel probably required to promote glycerol permeability and water transport across cell membranes. In Arabidopsis thaliana (Mouse-ear cress), this protein is Aquaporin NIP1-2 (NIP1-2).